The sequence spans 536 residues: SNW domain-containing protein 1 (536 aa).

Positions 1–46 are disordered; the sequence is MALTSFLPAPTQLSQDQLEAEEKARSQRSRQTSLVSSRREPPPYGY. At alanine 2 the chain carries N-acetylalanine. Residue serine 14 is modified to Phosphoserine. Lysine 23 participates in a covalent cross-link: Glycyl lysine isopeptide (Lys-Gly) (interchain with G-Cter in SUMO2). The interaction with PPIL1 stretch occupies residues 59–79; that stretch reads GDGGAFPEIHVAQYPLDMGRK. Residues lysine 81, lysine 97, lysine 115, lysine 122, lysine 141, lysine 158, and lysine 170 each participate in a glycyl lysine isopeptide (Lys-Gly) (interchain with G-Cter in SUMO2) cross-link. Residues 174 to 339 are SNW; it reads AQYIRYTPSQ…KARERRAGIK (166 aa). Phosphoserine occurs at positions 182 and 190. Lysine 193 is covalently cross-linked (Glycyl lysine isopeptide (Lys-Gly) (interchain with G-Cter in SUMO2)). The segment at 209–234 is disordered; that stretch reads PPRFKINKKIPRGPPSPPAPVMHSPS. Phosphoserine occurs at positions 224, 232, and 234. Glycyl lysine isopeptide (Lys-Gly) (interchain with G-Cter in SUMO2) cross-links involve residues lysine 240, lysine 258, lysine 286, lysine 339, lysine 344, lysine 416, and lysine 441. Residues 311–386 are disordered; that stretch reads KMAQKEKEKH…RSKLQRNENR (76 aa). Serine 446 is modified (phosphoserine). Lysine 452 participates in a covalent cross-link: Glycyl lysine isopeptide (Lys-Gly) (interchain with G-Cter in SUMO2). Composition is skewed to basic and acidic residues over residues 469 to 489 and 503 to 530; these read TNRF…RGRE and KFLE…EHEG. The interval 469–536 is disordered; sequence TNRFVPDKEF…EHEGKKRRKE (68 aa). Residues serine 479 and serine 481 each carry the phosphoserine modification. A Glycyl lysine isopeptide (Lys-Gly) (interchain with G-Cter in SUMO2) cross-link involves residue lysine 509.

The protein belongs to the SNW family. As to quaternary structure, identified in the spliceosome C complex. Associates with U4/U6-U5 tri-small nuclear ribonucleoproteins (U4/U6-U5 tri-snRNPs). Component of the minor spliceosome, which splices U12-type introns. Interacts with SKI, SMAD2,SMAD3, RBPJ, RB1, PABPN1, MAGEA1, SIRT1, FOXN3, U2AF2, PPIL1, DAXX and ATP1B4. Interacts with VDR and RXRA; preferentially associates with VDR:RXRA heterodimers. Interacts with NCOR2. Interacts with MAML1. Interacts with NOTCH1 NICD; the interaction involves multimerized NOTCH1 NICD. Forms a complex with NOTCH1 NICD and MAML1; the association is dissociated by RBPJ. Associates with positive transcription elongation factor b (P-TEFb). Component of the SNARP complex which consists at least of SNIP1, SNW1, THRAP3, BCLAF1 and PNN.

The protein resides in the nucleus. Its function is as follows. Involved in pre-mRNA splicing as component of the spliceosome. As a component of the minor spliceosome, involved in the splicing of U12-type introns in pre-mRNAs. Required in the specific splicing of CDKN1A pre-mRNA; the function probably involves the recruitment of U2AF2 to the mRNA. May recruit PPIL1 to the spliceosome. May be involved in cyclin-D1/CCND1 mRNA stability through the SNARP complex which associates with both the 3'end of the CCND1 gene and its mRNA. Involved in transcriptional regulation. Modulates TGF-beta-mediated transcription via association with SMAD proteins, MYOD1-mediated transcription via association with PABPN1, RB1-mediated transcriptional repression, and retinoid-X receptor (RXR)- and vitamin D receptor (VDR)-dependent gene transcription in a cell line-specific manner probably involving coactivators NCOA1 and GRIP1. Is involved in NOTCH1-mediated transcriptional activation. Binds to multimerized forms of Notch intracellular domain (NICD) and is proposed to recruit transcriptional coactivators such as MAML1 to form an intermediate preactivation complex which associates with DNA-bound CBF-1/RBPJ to form a transcriptional activation complex by releasing SNW1 and redundant NOTCH1 NICD. The sequence is that of SNW domain-containing protein 1 (SNW1) from Pongo abelii (Sumatran orangutan).